A 295-amino-acid polypeptide reads, in one-letter code: Uridine and thymidine phosphorylase (295 aa).

Phosphate is bound by residues Arg-81 and Arg-125–Thr-128. Positions 203 and 205 each coordinate substrate.

Belongs to the PNP/UDP phosphorylase family. Expressed in hypodermis, pharynx, spermatheca and gonad.

It carries out the reaction uridine + phosphate = alpha-D-ribose 1-phosphate + uracil. It catalyses the reaction thymidine + phosphate = 2-deoxy-alpha-D-ribose 1-phosphate + thymine. The enzyme catalyses 2'-deoxyuridine + phosphate = 2-deoxy-alpha-D-ribose 1-phosphate + uracil. Its pathway is pyrimidine metabolism; UMP biosynthesis via salvage pathway; uracil from uridine (phosphorylase route): step 1/1. It functions in the pathway pyrimidine metabolism; dTMP biosynthesis via salvage pathway; dTMP from thymine: step 1/2. Its function is as follows. Catalyzes the reversible phosphorylytic cleavage of uridine and thymidine to uracil and ribose-phosphate or thymine and deoxyribose-1-phosphate. The produced molecules are then utilized as carbon and energy sources or in the rescue of pyrimidine bases for nucleotide synthesis. Required for normal lifespan. The polypeptide is Uridine and thymidine phosphorylase (Caenorhabditis elegans).